A 196-amino-acid polypeptide reads, in one-letter code: Rho-related GTP-binding protein RhoB (196 aa).

12 to 19 is a GTP binding site; that stretch reads GDGACGKT. Tyr34 is a glycosylation site (O-linked (GlcNAc) tyrosine; by Photorhabdus PAU_02230). The short motif at 34-42 is the Effector region element; the sequence is YVPTVFENY. Thr37 carries (Microbial infection) O-linked (Glc) threonine; by C.difficile toxins TcdA and TcdB glycosylation. Asn41 carries the post-translational modification ADP-ribosylasparagine; by botulinum toxin. GTP-binding positions include 59 to 63 and 117 to 120; these read DTAGQ and NKKD. Residue Tyr154 is modified to Phosphotyrosine. S-palmitoyl cysteine attachment occurs at residues Cys189 and Cys192. Residue Cys193 is modified to Cysteine methyl ester. Cys193 is lipidated: S-farnesyl cysteine; in plasma membrane form. The S-geranylgeranyl cysteine; in endosomal form moiety is linked to residue Cys193. Positions 194-196 are cleaved as a propeptide — removed in mature form; the sequence is KVL.

Belongs to the small GTPase superfamily. Rho family. In terms of assembly, binds ROCK1 and ROCK2. Also binds PKN1/PRK1. Interacts with ARGGEF3. Interacts with RTKN. Interacts with AKAP13. Interacts with RIPOR1. Prenylation specifies the subcellular location of RHOB. The farnesylated form is localized to the plasma membrane while the geranylgeranylated form is localized to the endosome. In terms of processing, (Microbial infection) Glycosylated at Tyr-34 by Photorhabdus asymbiotica toxin PAU_02230. Mono-O-GlcNAcylation by PAU_02230 inhibits downstream signaling by an impaired interaction with diverse regulator and effector proteins of Rho and leads to actin disassembly. Post-translationally, (Microbial infection) Glucosylated at Thr-37 by C.difficile toxins TcdA and TcdB in the colonic epithelium. Monoglucosylation completely prevents the recognition of the downstream effector, blocking the GTPases in their inactive form, leading to actin cytoskeleton disruption.

Its subcellular location is the late endosome membrane. The protein localises to the cell membrane. It is found in the nucleus. The protein resides in the cleavage furrow. Functionally, mediates apoptosis in neoplastically transformed cells after DNA damage. Not essential for development but affects cell adhesion and growth factor signaling in transformed cells. Plays a negative role in tumorigenesis as deletion causes tumor formation. Involved in intracellular protein trafficking of a number of proteins. Targets PKN1 to endosomes and is involved in trafficking of the EGF receptor from late endosomes to lysosomes. Also required for stability and nuclear trafficking of AKT1/AKT which promotes endothelial cell survival during vascular development. Serves as a microtubule-dependent signal that is required for the myosin contractile ring formation during cell cycle cytokinesis. Required for genotoxic stress-induced cell death in breast cancer cells. The protein is Rho-related GTP-binding protein RhoB (RHOB) of Homo sapiens (Human).